We begin with the raw amino-acid sequence, 338 residues long: Fructose-1,6-bisphosphatase class 1 1 (338 aa).

Mg(2+) is bound by residues E94, D116, L118, and D119. Residues 119-122, N210, and K276 each bind substrate; that span reads DGSS. A Mg(2+)-binding site is contributed by E282.

This sequence belongs to the FBPase class 1 family. As to quaternary structure, homotetramer. Mg(2+) serves as cofactor.

It is found in the cytoplasm. The enzyme catalyses beta-D-fructose 1,6-bisphosphate + H2O = beta-D-fructose 6-phosphate + phosphate. Its pathway is carbohydrate biosynthesis; gluconeogenesis. This Paraburkholderia xenovorans (strain LB400) protein is Fructose-1,6-bisphosphatase class 1 1.